The sequence spans 338 residues: Ketol-acid reductoisomerase (NADP(+)) (338 aa).

Residues 1–181 (MQVYYDKDCD…GGGRTGIIET (181 aa)) enclose the KARI N-terminal Rossmann domain. NADP(+)-binding positions include 24 to 27 (YGSQ), Arg47, Ser50, Ser52, and 82 to 85 (DEFQ). His107 is a catalytic residue. Gly133 contacts NADP(+). The 146-residue stretch at 182–327 (TFKDETETDL…EKLRGMMPWI (146 aa)) folds into the KARI C-terminal knotted domain. The Mg(2+) site is built by Asp190, Glu194, Glu226, and Glu230. Ser251 contacts substrate.

It belongs to the ketol-acid reductoisomerase family. Requires Mg(2+) as cofactor.

It catalyses the reaction (2R)-2,3-dihydroxy-3-methylbutanoate + NADP(+) = (2S)-2-acetolactate + NADPH + H(+). The catalysed reaction is (2R,3R)-2,3-dihydroxy-3-methylpentanoate + NADP(+) = (S)-2-ethyl-2-hydroxy-3-oxobutanoate + NADPH + H(+). The protein operates within amino-acid biosynthesis; L-isoleucine biosynthesis; L-isoleucine from 2-oxobutanoate: step 2/4. It functions in the pathway amino-acid biosynthesis; L-valine biosynthesis; L-valine from pyruvate: step 2/4. In terms of biological role, involved in the biosynthesis of branched-chain amino acids (BCAA). Catalyzes an alkyl-migration followed by a ketol-acid reduction of (S)-2-acetolactate (S2AL) to yield (R)-2,3-dihydroxy-isovalerate. In the isomerase reaction, S2AL is rearranged via a Mg-dependent methyl migration to produce 3-hydroxy-3-methyl-2-ketobutyrate (HMKB). In the reductase reaction, this 2-ketoacid undergoes a metal-dependent reduction by NADPH to yield (R)-2,3-dihydroxy-isovalerate. The polypeptide is Ketol-acid reductoisomerase (NADP(+)) (Alcanivorax borkumensis (strain ATCC 700651 / DSM 11573 / NCIMB 13689 / SK2)).